The primary structure comprises 434 residues: L-2-hydroxyglutarate dehydrogenase, mitochondrial (434 aa).

It belongs to the L2HGDH family. The cofactor is FAD.

The protein localises to the mitochondrion. It carries out the reaction (S)-2-hydroxyglutarate + A = 2-oxoglutarate + AH2. The chain is L-2-hydroxyglutarate dehydrogenase, mitochondrial from Caenorhabditis briggsae.